Consider the following 318-residue polypeptide: Curved DNA-binding protein (318 aa).

The 65-residue stretch at 5-69 (DYYKILGVEP…QKRAEFDEIR (65 aa)) folds into the J domain. Residues 111–130 (GGGNPFGGARQQQRSAGRRG) are disordered.

It is found in the cytoplasm. Its subcellular location is the nucleoid. Its function is as follows. DNA-binding protein that preferentially recognizes a curved DNA sequence. It is probably a functional analog of DnaJ; displays overlapping activities with DnaJ, but functions under different conditions, probably acting as a molecular chaperone in an adaptive response to environmental stresses other than heat shock. Lacks autonomous chaperone activity; binds native substrates and targets them for recognition by DnaK. Its activity is inhibited by the binding of CbpM. The polypeptide is Curved DNA-binding protein (Pseudomonas putida (strain GB-1)).